The primary structure comprises 223 residues: Deoxyribose-phosphate aldolase (223 aa).

Asp-89 (proton donor/acceptor) is an active-site residue. The active-site Schiff-base intermediate with acetaldehyde is the Lys-152. Catalysis depends on Lys-181, which acts as the Proton donor/acceptor.

It belongs to the DeoC/FbaB aldolase family. DeoC type 1 subfamily.

The protein localises to the cytoplasm. It catalyses the reaction 2-deoxy-D-ribose 5-phosphate = D-glyceraldehyde 3-phosphate + acetaldehyde. The protein operates within carbohydrate degradation; 2-deoxy-D-ribose 1-phosphate degradation; D-glyceraldehyde 3-phosphate and acetaldehyde from 2-deoxy-alpha-D-ribose 1-phosphate: step 2/2. Functionally, catalyzes a reversible aldol reaction between acetaldehyde and D-glyceraldehyde 3-phosphate to generate 2-deoxy-D-ribose 5-phosphate. This Bacillus subtilis (strain 168) protein is Deoxyribose-phosphate aldolase.